We begin with the raw amino-acid sequence, 214 residues long: Probable nicotinate-nucleotide adenylyltransferase (214 aa).

This sequence belongs to the NadD family.

The enzyme catalyses nicotinate beta-D-ribonucleotide + ATP + H(+) = deamido-NAD(+) + diphosphate. It functions in the pathway cofactor biosynthesis; NAD(+) biosynthesis; deamido-NAD(+) from nicotinate D-ribonucleotide: step 1/1. Functionally, catalyzes the reversible adenylation of nicotinate mononucleotide (NaMN) to nicotinic acid adenine dinucleotide (NaAD). In Aeromonas salmonicida (strain A449), this protein is Probable nicotinate-nucleotide adenylyltransferase.